The primary structure comprises 1266 residues: SUMO-interacting motif-containing protein 1 (1266 aa).

The tract at residues Met1 to Pro35 is disordered. The span at Gly22–Leu31 shows a compositional bias: basic residues. The SUMO interaction motif 1 (SIM); mediates the binding to polysumoylated substrates motif lies at Phe45–Thr49. The short motif at Val64–Thr68 is the SUMO interaction motif 2 (SIM); mediates the binding to polysumoylated substrates element. Composition is skewed to low complexity over residues Ser183–Asn197 and Ser532–Ser553. 4 disordered regions span residues Ser183 to Gln206, Ser532 to Val732, Asn756 to Ala812, and Leu1024 to Asn1052. Over residues Ser560–Val571 the composition is skewed to polar residues. Residues Ser764–Ser777 are compositionally biased toward low complexity. Residues Gln779–Arg1266 form an interaction with SLF2 region. The required for inhibition of CAPN3 protease activity stretch occupies residues Ser857 to Arg1266. Residues Ile865–Arg1200 form an NSE5-like domain region.

Forms a heterodimer with SLF2. Interacts (via SIM domains) with SUMO1 and SUMO2. Interacts with CAPN3 and CTBP1. Interacts with SMC6 and ZNF451.

The protein resides in the nucleus. It localises to the PML body. Inhibits the protease activity of CAPN3. May play a role in SMC5-SMC6 complex recruitment for viral restriction. Forms a complex with SLF2 and this complex is required to recruit SMC5-SMC6 complex to PML nuclear bodies and sites of viral replication. The protein is SUMO-interacting motif-containing protein 1 (Simc1) of Rattus norvegicus (Rat).